The sequence spans 190 residues: Myosin, light chain 1, alkali; skeletal, fast (190 aa).

A compositionally biased stretch (basic and acidic residues) spans 1–17 (MAPKKDAKKPEPPKKAE). Positions 1-33 (MAPKKDAKKPEPPKKAEPAPAPAPAPEPPKADA) are disordered. Residues 19-28 (APAPAPAPEP) show a composition bias toward pro residues. EF-hand domains follow at residues 46-81 (DQME…LGQN) and 123-158 (ATYD…LGEK).

In terms of assembly, myosin is a hexamer of 2 heavy chains and 4 light chains. Does not bind calcium. In terms of tissue distribution, expressed in fast muscle fibers during skeletal muscle differentiation.

Non-regulatory myosin light chain required for proper formation and/or maintenance of myofibers, and thus appropriate muscle function. The protein is Myosin, light chain 1, alkali; skeletal, fast of Danio rerio (Zebrafish).